The chain runs to 72 residues: Small ribosomal subunit protein eS31 (72 aa).

The Zn(2+) site is built by cysteine 32, cysteine 35, cysteine 51, and cysteine 54. Residues 32 to 54 form a C4-type zinc finger; the sequence is CPRCGSVMAYHKEPVPRWHCGKC.

The protein belongs to the eukaryotic ribosomal protein eS31 family. Part of the 30S ribosomal subunit. Zn(2+) serves as cofactor.

This Caldivirga maquilingensis (strain ATCC 700844 / DSM 13496 / JCM 10307 / IC-167) protein is Small ribosomal subunit protein eS31.